We begin with the raw amino-acid sequence, 40 residues long: Photosystem II reaction center protein J (40 aa).

Residues 8–28 (IPLWLIGTVTGIIVIGLLGIF) form a helical membrane-spanning segment.

This sequence belongs to the PsbJ family. PSII is composed of 1 copy each of membrane proteins PsbA, PsbB, PsbC, PsbD, PsbE, PsbF, PsbH, PsbI, PsbJ, PsbK, PsbL, PsbM, PsbT, PsbX, PsbY, PsbZ, Psb30/Ycf12, at least 3 peripheral proteins of the oxygen-evolving complex and a large number of cofactors. It forms dimeric complexes.

Its subcellular location is the plastid. It localises to the chloroplast thylakoid membrane. One of the components of the core complex of photosystem II (PSII). PSII is a light-driven water:plastoquinone oxidoreductase that uses light energy to abstract electrons from H(2)O, generating O(2) and a proton gradient subsequently used for ATP formation. It consists of a core antenna complex that captures photons, and an electron transfer chain that converts photonic excitation into a charge separation. In Pinus koraiensis (Korean pine), this protein is Photosystem II reaction center protein J.